A 434-amino-acid chain; its full sequence is Trigger factor (434 aa).

In terms of domain architecture, PPIase FKBP-type spans 163–248; that stretch reads GDRVTIDFEG…LTKIEAQHLP (86 aa).

The protein belongs to the FKBP-type PPIase family. Tig subfamily.

The protein resides in the cytoplasm. The catalysed reaction is [protein]-peptidylproline (omega=180) = [protein]-peptidylproline (omega=0). Functionally, involved in protein export. Acts as a chaperone by maintaining the newly synthesized protein in an open conformation. Functions as a peptidyl-prolyl cis-trans isomerase. The sequence is that of Trigger factor from Methylibium petroleiphilum (strain ATCC BAA-1232 / LMG 22953 / PM1).